We begin with the raw amino-acid sequence, 485 residues long: Signal recognition particle protein (485 aa).

GTP is bound by residues 107–114, 189–193, and 247–250; these read GLQGAGKT, DTAGR, and TKLD. Positions 452-485 are disordered; it reads GFGGGAPAPQPGFRGYGPPKKQKKGSKKKKGFGL. Over residues 471-485 the composition is skewed to basic residues; the sequence is KKQKKGSKKKKGFGL.

It belongs to the GTP-binding SRP family. SRP54 subfamily. As to quaternary structure, part of the signal recognition particle protein translocation system, which is composed of SRP and FtsY.

Its subcellular location is the cytoplasm. The enzyme catalyses GTP + H2O = GDP + phosphate + H(+). Functionally, involved in targeting and insertion of nascent membrane proteins into the cytoplasmic membrane. Binds to the hydrophobic signal sequence of the ribosome-nascent chain (RNC) as it emerges from the ribosomes. The SRP-RNC complex is then targeted to the cytoplasmic membrane where it interacts with the SRP receptor FtsY. This chain is Signal recognition particle protein, found in Synechococcus elongatus (strain ATCC 33912 / PCC 7942 / FACHB-805) (Anacystis nidulans R2).